Here is a 133-residue protein sequence, read N- to C-terminus: MAMYPRELKWGVAHIYSSFNNTHVHITDLTGAETVARVTGGMVVKADREKPSPYAAMIAASRAAQKAMERGIAAIHIKVRAPGGHGPKTPGPGAQAAIRALARAGFIIGRIEDVTPIPHDTTRRPGGRRGRRV.

The protein belongs to the universal ribosomal protein uS11 family. Part of the 30S ribosomal subunit.

Functionally, located on the platform of the 30S subunit. The sequence is that of Small ribosomal subunit protein uS11 from Aeropyrum pernix (strain ATCC 700893 / DSM 11879 / JCM 9820 / NBRC 100138 / K1).